A 51-amino-acid chain; its full sequence is Lipid-anchored plasma membrane protein CPP3 (51 aa).

A disordered region spans residues 1-28; it reads MRHHQNMHYAPQQQPVYVQQPPPRRESG.

Belongs to the CYSTM1 family. In terms of processing, palmitoylated near the C-terminus.

Its subcellular location is the cell membrane. This is Lipid-anchored plasma membrane protein CPP3 from Saccharomyces cerevisiae (strain ATCC 204508 / S288c) (Baker's yeast).